A 482-amino-acid chain; its full sequence is Cysteine--tRNA ligase (482 aa).

Position 29 (C29) interacts with Zn(2+). A 'HIGH' region motif is present at residues 31–41; that stretch reads PTVYDFAHIGN. Residues C224, H249, and E253 each coordinate Zn(2+). The short motif at 282 to 286 is the 'KMSKS' region element; the sequence is KMSKS. An ATP-binding site is contributed by K285.

It belongs to the class-I aminoacyl-tRNA synthetase family. In terms of assembly, monomer. Requires Zn(2+) as cofactor.

It localises to the cytoplasm. The catalysed reaction is tRNA(Cys) + L-cysteine + ATP = L-cysteinyl-tRNA(Cys) + AMP + diphosphate. This Nitrobacter hamburgensis (strain DSM 10229 / NCIMB 13809 / X14) protein is Cysteine--tRNA ligase.